We begin with the raw amino-acid sequence, 217 residues long: Uracil-DNA glycosylase (217 aa).

Asp62 functions as the Proton acceptor in the catalytic mechanism.

Belongs to the uracil-DNA glycosylase (UDG) superfamily. UNG family.

Its subcellular location is the cytoplasm. The enzyme catalyses Hydrolyzes single-stranded DNA or mismatched double-stranded DNA and polynucleotides, releasing free uracil.. Its function is as follows. Excises uracil residues from the DNA which can arise as a result of misincorporation of dUMP residues by DNA polymerase or due to deamination of cytosine. The chain is Uracil-DNA glycosylase from Streptococcus pneumoniae serotype 19F (strain G54).